Here is a 283-residue protein sequence, read N- to C-terminus: Mau operon transcriptional activator (283 aa).

Positions 1–58 constitute an HTH lysR-type domain; sequence MNWDDLRVVAAINRCGSFNRAAKMLNVEETTIARRLARLEGSLGCVLFQAVDGQRRPT. Positions 18–37 form a DNA-binding region, H-T-H motif; that stretch reads FNRAAKMLNVEETTIARRLA.

This sequence belongs to the LysR transcriptional regulatory family.

Transcriptional activator of the mau genes involved in methylamine metabolism. This Paracoccus denitrificans protein is Mau operon transcriptional activator (mauR).